Here is a 201-residue protein sequence, read N- to C-terminus: GTP cyclohydrolase 1 (201 aa).

A disordered region spans residues 1–20 (MDATVKKMSPETSRPSREEA). Residues Cys-91, His-94, and Cys-162 each coordinate Zn(2+).

The protein belongs to the GTP cyclohydrolase I family. In terms of assembly, homomer.

The enzyme catalyses GTP + H2O = 7,8-dihydroneopterin 3'-triphosphate + formate + H(+). Its pathway is cofactor biosynthesis; 7,8-dihydroneopterin triphosphate biosynthesis; 7,8-dihydroneopterin triphosphate from GTP: step 1/1. The polypeptide is GTP cyclohydrolase 1 (Allorhizobium ampelinum (strain ATCC BAA-846 / DSM 112012 / S4) (Agrobacterium vitis (strain S4))).